The chain runs to 283 residues: Phosphatidylglycerol--prolipoprotein diacylglyceryl transferase (283 aa).

The next 4 membrane-spanning stretches (helical) occupy residues 17–37 (LAVR…TFLG), 56–76 (FLTW…VLFY), 92–112 (WEGG…IWLF), and 117–137 (GIGF…GLAS). An a 1,2-diacyl-sn-glycero-3-phospho-(1'-sn-glycerol)-binding site is contributed by arginine 139. 3 helical membrane-spanning segments follow: residues 194 to 214 (PSQL…VWLF), 222 to 242 (GQVA…AEFA), and 255 to 275 (GLSM…VGFV).

It belongs to the Lgt family.

Its subcellular location is the cell inner membrane. The catalysed reaction is L-cysteinyl-[prolipoprotein] + a 1,2-diacyl-sn-glycero-3-phospho-(1'-sn-glycerol) = an S-1,2-diacyl-sn-glyceryl-L-cysteinyl-[prolipoprotein] + sn-glycerol 1-phosphate + H(+). It functions in the pathway protein modification; lipoprotein biosynthesis (diacylglyceryl transfer). In terms of biological role, catalyzes the transfer of the diacylglyceryl group from phosphatidylglycerol to the sulfhydryl group of the N-terminal cysteine of a prolipoprotein, the first step in the formation of mature lipoproteins. This chain is Phosphatidylglycerol--prolipoprotein diacylglyceryl transferase, found in Neisseria meningitidis serogroup C (strain 053442).